Here is a 144-residue protein sequence, read N- to C-terminus: Fluoride-specific ion channel FluC 1 (144 aa).

Transmembrane regions (helical) follow at residues 11–31, 44–64, 74–94, and 107–127; these read LIYI…YYLG, LATL…TTYI, VITG…TFSV, and IAFL…GLGY. Positions 84 and 87 each coordinate Na(+).

Belongs to the fluoride channel Fluc/FEX (TC 1.A.43) family.

Its subcellular location is the cell membrane. The enzyme catalyses fluoride(in) = fluoride(out). Na(+) is not transported, but it plays an essential structural role and its presence is essential for fluoride channel function. Functionally, fluoride-specific ion channel. Important for reducing fluoride concentration in the cell, thus reducing its toxicity. The chain is Fluoride-specific ion channel FluC 1 from Bacillus cereus (strain ATCC 14579 / DSM 31 / CCUG 7414 / JCM 2152 / NBRC 15305 / NCIMB 9373 / NCTC 2599 / NRRL B-3711).